Reading from the N-terminus, the 151-residue chain is Ribosome maturation factor RimP (151 aa).

Belongs to the RimP family.

The protein localises to the cytoplasm. In terms of biological role, required for maturation of 30S ribosomal subunits. The chain is Ribosome maturation factor RimP from Shewanella piezotolerans (strain WP3 / JCM 13877).